The primary structure comprises 169 residues: UPF0251 protein MM_2090 (169 aa).

The protein belongs to the UPF0251 family.

This chain is UPF0251 protein MM_2090, found in Methanosarcina mazei (strain ATCC BAA-159 / DSM 3647 / Goe1 / Go1 / JCM 11833 / OCM 88) (Methanosarcina frisia).